The following is a 401-amino-acid chain: Nodulation protein E (401 aa).

A Ketosynthase family 3 (KS3) domain is found at 2–400 (DRRVVITGMG…GTNAVLAFKQ (399 aa)). Residues Cys-161, His-293, and His-330 each act as for beta-ketoacyl synthase activity in the active site. The chain crosses the membrane as a helical span at residues 328 to 347 (HAHCIGAASALEMIACVMAI).

It belongs to the thiolase-like superfamily. Beta-ketoacyl-ACP synthases family.

It localises to the cell inner membrane. Its function is as follows. Proposed to synthesize NOD factor fatty acyl chain. Involved in the synthesis of a highly unsaturated fatty acid moiety, which forms part of a lipo-oligosaccharide that is responsible for host specificity. This Rhizobium meliloti (Ensifer meliloti) protein is Nodulation protein E (nodE).